Reading from the N-terminus, the 164-residue chain is Two-component response regulator ARR16 (164 aa).

The region spanning 30–160 (HVLAVDDNLI…DVEKLKCHLM (131 aa)) is the Response regulatory domain. The residue at position 93 (D93) is a 4-aspartylphosphate.

It belongs to the ARR family. Type-A subfamily. Two-component system major event consists of a His-to-Asp phosphorelay between a sensor histidine kinase (HK) and a response regulator (RR). In plants, the His-to-Asp phosphorelay involves an additional intermediate named Histidine-containing phosphotransfer protein (HPt). This multistep phosphorelay consists of a His-Asp-His-Asp sequential transfer of a phosphate group between first a His and an Asp of the HK protein, followed by the transfer to a conserved His of the HPt protein and finally the transfer to an Asp in the receiver domain of the RR protein.

It localises to the nucleus. Functionally, functions as a response regulator involved in His-to-Asp phosphorelay signal transduction system. Phosphorylation of the Asp residue in the receiver domain activates the ability of the protein to promote the transcription of target genes. Type-A response regulators seem to act as negative regulators of the cytokinin signaling. The chain is Two-component response regulator ARR16 (ARR16) from Arabidopsis thaliana (Mouse-ear cress).